We begin with the raw amino-acid sequence, 371 residues long: DNA replication and repair protein RecF (371 aa).

30–37 contacts ATP; the sequence is GKNGQGKT.

It belongs to the RecF family.

The protein localises to the cytoplasm. In terms of biological role, the RecF protein is involved in DNA metabolism; it is required for DNA replication and normal SOS inducibility. RecF binds preferentially to single-stranded, linear DNA. It also seems to bind ATP. The sequence is that of DNA replication and repair protein RecF from Clostridioides difficile (strain 630) (Peptoclostridium difficile).